We begin with the raw amino-acid sequence, 519 residues long: Aldehyde dehydrogenase, mitochondrial (519 aa).

A mitochondrion-targeting transit peptide spans 1 to 19 (MLRAALSTARRGPRLSRLL). The short motif at 12–26 (GPRLSRLLSAAATSA) is the SIFI-degron element. 4 positions are modified to N6-acetyllysine: Lys-54, Lys-75, Lys-80, and Lys-161. 264-269 (GSTEVG) is an NAD(+) binding site. Glu-287 acts as the Proton acceptor in catalysis. Catalysis depends on Cys-321, which acts as the Nucleophile. Lys-370, Lys-377, Lys-385, Lys-409, Lys-428, Lys-430, Lys-443, and Lys-453 each carry N6-acetyllysine.

It belongs to the aldehyde dehydrogenase family. In terms of assembly, homotetramer. In terms of processing, in response to mitochondrial stress, the precursor protein is ubiquitinated by the SIFI complex in the cytoplasm before mitochondrial import, leading to its degradation. Within the SIFI complex, UBR4 initiates ubiquitin chain that are further elongated or branched by KCMF1.

Its subcellular location is the mitochondrion matrix. It catalyses the reaction an aldehyde + NAD(+) + H2O = a carboxylate + NADH + 2 H(+). The protein operates within alcohol metabolism; ethanol degradation; acetate from ethanol: step 2/2. Its function is as follows. Required for clearance of cellular formaldehyde, a cytotoxic and carcinogenic metabolite that induces DNA damage. This chain is Aldehyde dehydrogenase, mitochondrial (Aldh2), found in Rattus norvegicus (Rat).